Consider the following 31-residue polypeptide: Photosystem I reaction center subunit XII (31 aa).

Residues 7 to 26 form a helical membrane-spanning segment; the sequence is QISIILLIALIPAFFSLKLG.

It belongs to the PsaM family.

The protein localises to the plastid. It localises to the chloroplast thylakoid membrane. This chain is Photosystem I reaction center subunit XII, found in Euglena myxocylindracea.